We begin with the raw amino-acid sequence, 600 residues long: Spastin (600 aa).

Residues 1 to 39 (MNSPGGRNDKKKPVTPAAETGPGSPTTPPSTETQVVLAP) are disordered. Topologically, residues 1–53 (MNSPGGRNDKKKPVTPAAETGPGSPTTPPSTETQVVLAPPSPHKRNLHLFSYP) are cytoplasmic. The span at 15 to 33 (TPAAETGPGSPTTPPSTET) shows a compositional bias: low complexity. The helical intramembrane region spans 54-74 (LLAVFSLLRFLAFQLGLLFVW). Residues 75-600 (CCELLSRSVM…WNQDFGDTTV (526 aa)) are Cytoplasmic-facing. The 76-residue stretch at 110–185 (YHQQAFQYIS…IMAKDRLQLL (76 aa)) folds into the MIT domain. The tract at residues 213 to 294 (GLLKPEKGAV…KPATPTTAVR (82 aa)) is disordered. A compositionally biased stretch (basic and acidic residues) spans 216–228 (KPEKGAVPKKKDP). The span at 253–291 (PNCTSVPTSARQAGAHTPSNRGATGKNNTRTNKPATPTT) shows a compositional bias: polar residues. Residue 366-373 (GPPGNGKT) participates in ATP binding.

It belongs to the AAA ATPase family. Spastin subfamily. As to quaternary structure, homohexamer. The homohexamer is stabilized by ATP-binding. The homohexamer may adopt a ring conformation through which microtubules pass prior to being severed. Interacts with microtubules.

It localises to the membrane. The protein resides in the cytoplasm. It is found in the cytoskeleton. The protein localises to the microtubule organizing center. Its subcellular location is the centrosome. It localises to the perinuclear region. The protein resides in the nucleus. It carries out the reaction n ATP + n H2O + a microtubule = n ADP + n phosphate + (n+1) alpha/beta tubulin heterodimers.. ATP-dependent microtubule severing protein that specifically recognizes and cuts microtubules that are polyglutamylated. Preferentially recognizes and acts on microtubules decorated with short polyglutamate tails: severing activity increases as the number of glutamates per tubulin rises from one to eight, but decreases beyond this glutamylation threshold. Microtubule severing promotes reorganization of cellular microtubule arrays and the release of microtubules from the centrosome following nucleation. Required for membrane traffic from the endoplasmic reticulum (ER) to the Golgi and for completion of the abscission stage of cytokinesis. Also plays a role in axon growth and the formation of axonal branches. In Xenopus laevis (African clawed frog), this protein is Spastin.